Reading from the N-terminus, the 125-residue chain is Fluoride-specific ion channel FluC (125 aa).

A run of 4 helical transmembrane segments spans residues 6-26 (GFIA…SGLV), 34-54 (FPWG…LVWE), 68-88 (AVLL…IFES), and 98-118 (LALL…LFAG). Na(+) contacts are provided by Gly-76 and Thr-79.

Belongs to the fluoride channel Fluc/FEX (TC 1.A.43) family.

It localises to the cell inner membrane. The enzyme catalyses fluoride(in) = fluoride(out). Its activity is regulated as follows. Na(+) is not transported, but it plays an essential structural role and its presence is essential for fluoride channel function. In terms of biological role, fluoride-specific ion channel. Important for reducing fluoride concentration in the cell, thus reducing its toxicity. This chain is Fluoride-specific ion channel FluC, found in Solidesulfovibrio magneticus (strain ATCC 700980 / DSM 13731 / RS-1) (Desulfovibrio magneticus).